A 668-amino-acid chain; its full sequence is DNA ligase (668 aa).

NAD(+) is bound by residues 34-38 (DTEYD), 83-84 (SL), and glutamate 114. The N6-AMP-lysine intermediate role is filled by lysine 116. Residues arginine 137, glutamate 171, lysine 286, and lysine 310 each coordinate NAD(+). The Zn(2+) site is built by cysteine 404, cysteine 407, cysteine 422, and cysteine 427. Positions 588 to 668 (NSDSIIANKT…FFDLLKSEKG (81 aa)) constitute a BRCT domain.

The protein belongs to the NAD-dependent DNA ligase family. LigA subfamily. The cofactor is Mg(2+). It depends on Mn(2+) as a cofactor.

It carries out the reaction NAD(+) + (deoxyribonucleotide)n-3'-hydroxyl + 5'-phospho-(deoxyribonucleotide)m = (deoxyribonucleotide)n+m + AMP + beta-nicotinamide D-nucleotide.. Functionally, DNA ligase that catalyzes the formation of phosphodiester linkages between 5'-phosphoryl and 3'-hydroxyl groups in double-stranded DNA using NAD as a coenzyme and as the energy source for the reaction. It is essential for DNA replication and repair of damaged DNA. This is DNA ligase from Mycoplasma capricolum subsp. capricolum (strain California kid / ATCC 27343 / NCTC 10154).